The following is a 1444-amino-acid chain: Adhesin P1 (1444 aa).

An N-terminal signal peptide occupies residues 1–30; it reads MHQPKKRLAKKSWAFLTAALTLGVITGVGG. Disordered regions lie at residues 231–283, 845–885, and 927–949; these read QSSF…EVER, IPFE…ALPN, and GDSNDQFNKDSEQKWDKTETNEG. The segment covering 240–257 has biased composition (basic and acidic residues); that stretch reads LQKDSPVKDSSKQGEKLS. The segment covering 258 to 272 has biased composition (low complexity); the sequence is ETTASSMSSGMATST. Polar residues-rich tracts occupy residues 851-860 and 868-878; these read KPSNNSTPFD and VTPSGGSSKPT. Residues 933 to 946 are compositionally biased toward basic and acidic residues; the sequence is FNKDSEQKWDKTET. A helical membrane pass occupies residues 1353-1373; the sequence is VLPLIVTVPIVVIILSVTLGL. Residues 1419–1444 are disordered; sequence NAPKKLKQATPTKPTPKTPPKPPVKQ. The segment covering 1431 to 1444 has biased composition (pro residues); sequence KPTPKTPPKPPVKQ.

It belongs to the adhesin P1 family.

The protein localises to the cell membrane. In terms of biological role, the protein is the major adhesin mediating the attachment of this mycoplasma to the ciliated epithelium. The protein is Adhesin P1 (mgpA) of Mycoplasma genitalium (strain ATCC 33530 / DSM 19775 / NCTC 10195 / G37) (Mycoplasmoides genitalium).